Reading from the N-terminus, the 299-residue chain is MATLLATRGNRATWRDYLELTKPKVVVLMLITSLVGMFLASRAGVPWTVLLFGNLGIGLCAGAAAAVNHVVDRRIDALMARTRRRPLAEGRVAPLAALGFALALAVAGMALLLTFTNPLAAWLTLASLLGYAVLYTGFLKRATPQNIVIGGLAGAAPPLLGWVAVSGQLSAEPLLLVLIVFTWTPPHFWALAIHRKAEYAKAEIPMLPVTHGEAYTKLHILLYTLALLAVTLLPYAIHMSGPLYLLCALLLGGRFLHWAWALYKDSKPHAAIGTFKYSIRYLFLLFIALLVDHYLPLTL.

The next 9 helical transmembrane spans lie at 25 to 45 (VVVL…RAGV), 47 to 67 (WTVL…AAAV), 95 to 115 (LAAL…LLTF), 119 to 139 (LAAW…TGFL), 147 to 167 (IVIG…AVSG), 173 to 193 (PLLL…ALAI), 218 to 238 (LHIL…YAIH), 243 to 263 (LYLL…WALY), and 279 to 299 (IRYL…PLTL).

This sequence belongs to the UbiA prenyltransferase family. Protoheme IX farnesyltransferase subfamily.

The protein localises to the cell inner membrane. The catalysed reaction is heme b + (2E,6E)-farnesyl diphosphate + H2O = Fe(II)-heme o + diphosphate. The protein operates within porphyrin-containing compound metabolism; heme O biosynthesis; heme O from protoheme: step 1/1. In terms of biological role, converts heme B (protoheme IX) to heme O by substitution of the vinyl group on carbon 2 of heme B porphyrin ring with a hydroxyethyl farnesyl side group. In Azotobacter vinelandii (strain DJ / ATCC BAA-1303), this protein is Protoheme IX farnesyltransferase.